The following is an 839-amino-acid chain: Protein translocase subunit SecA (839 aa).

Residues glutamine 85, 103–107 (GEGKT), and aspartate 493 contribute to the ATP site. Residues 780 to 790 (QIHEQERERAS) show a composition bias toward basic and acidic residues. Positions 780–839 (QIHEQERERASQRATTAAPQNIQSQQSANTDDLPKVERNEACPCGSGKKFKNCHGRKSFS) are disordered. The segment covering 791-809 (QRATTAAPQNIQSQQSANT) has biased composition (polar residues). Residues cysteine 821, cysteine 823, cysteine 832, and histidine 833 each coordinate Zn(2+). A compositionally biased stretch (basic residues) spans 827–839 (KKFKNCHGRKSFS).

It belongs to the SecA family. Monomer and homodimer. Part of the essential Sec protein translocation apparatus which comprises SecA, SecYEG and auxiliary proteins SecDF. Other proteins may also be involved. The cofactor is Zn(2+).

The protein localises to the cell membrane. It localises to the cytoplasm. It carries out the reaction ATP + H2O + cellular proteinSide 1 = ADP + phosphate + cellular proteinSide 2.. In terms of biological role, part of the Sec protein translocase complex. Interacts with the SecYEG preprotein conducting channel. Has a central role in coupling the hydrolysis of ATP to the transfer of proteins into and across the cell membrane, serving as an ATP-driven molecular motor driving the stepwise translocation of polypeptide chains across the membrane. This Streptococcus pyogenes serotype M1 protein is Protein translocase subunit SecA.